The following is a 323-amino-acid chain: D-specific alpha-keto acid dehydrogenase (323 aa).

Residues 157 to 158 (HI), 230 to 232 (TGR), and Asp-256 each bind NAD(+). Arg-232 is an active-site residue. The active site involves Glu-261. His-293 acts as the Proton donor in catalysis. 293–296 (HTAY) serves as a coordination point for NAD(+).

The protein belongs to the D-isomer specific 2-hydroxyacid dehydrogenase family.

In terms of biological role, required for high-level resistance to glycopeptides antibiotics. Catalyzes the reduction of 2-keto acids to 2-D-hydroxy acids that give rise to peptidoglycan precursors that terminate in the depsipeptide D-alanine-2-lactate rather than the dipeptide D-alanine-D-alanine thus preventing vancomycin binding. This is D-specific alpha-keto acid dehydrogenase (vanHB) from Enterococcus faecalis (strain ATCC 700802 / V583).